The following is a 99-amino-acid chain: NADH-quinone oxidoreductase subunit K (99 aa).

3 helical membrane passes run 3-23 (PANY…GVLL), 28-48 (IVMF…FVTF), and 59-79 (MIAF…LAII).

The protein belongs to the complex I subunit 4L family. As to quaternary structure, NDH-1 is composed of 14 different subunits. Subunits NuoA, H, J, K, L, M, N constitute the membrane sector of the complex.

The protein resides in the cell membrane. The enzyme catalyses a quinone + NADH + 5 H(+)(in) = a quinol + NAD(+) + 4 H(+)(out). Functionally, NDH-1 shuttles electrons from NADH, via FMN and iron-sulfur (Fe-S) centers, to quinones in the respiratory chain. The immediate electron acceptor for the enzyme in this species is believed to be a menaquinone. Couples the redox reaction to proton translocation (for every two electrons transferred, four hydrogen ions are translocated across the cytoplasmic membrane), and thus conserves the redox energy in a proton gradient. This chain is NADH-quinone oxidoreductase subunit K, found in Mycobacterium bovis (strain ATCC BAA-935 / AF2122/97).